The chain runs to 248 residues: Uracil-DNA glycosylase (248 aa).

Asp-85 (proton acceptor) is an active-site residue.

This sequence belongs to the uracil-DNA glycosylase (UDG) superfamily. UNG family.

The protein resides in the cytoplasm. It carries out the reaction Hydrolyzes single-stranded DNA or mismatched double-stranded DNA and polynucleotides, releasing free uracil.. Its function is as follows. Excises uracil residues from the DNA which can arise as a result of misincorporation of dUMP residues by DNA polymerase or due to deamination of cytosine. The protein is Uracil-DNA glycosylase of Deinococcus deserti (strain DSM 17065 / CIP 109153 / LMG 22923 / VCD115).